We begin with the raw amino-acid sequence, 225 residues long: Imidazole glycerol phosphate synthase subunit HisH (225 aa).

The Glutamine amidotransferase type-1 domain maps to 5 to 220 (KNVIVDTGCA…LELDSTELNQ (216 aa)). The Nucleophile role is filled by Cys80. Catalysis depends on residues His195 and Glu197.

Heterodimer of HisH and HisF.

Its subcellular location is the cytoplasm. The enzyme catalyses 5-[(5-phospho-1-deoxy-D-ribulos-1-ylimino)methylamino]-1-(5-phospho-beta-D-ribosyl)imidazole-4-carboxamide + L-glutamine = D-erythro-1-(imidazol-4-yl)glycerol 3-phosphate + 5-amino-1-(5-phospho-beta-D-ribosyl)imidazole-4-carboxamide + L-glutamate + H(+). It carries out the reaction L-glutamine + H2O = L-glutamate + NH4(+). The protein operates within amino-acid biosynthesis; L-histidine biosynthesis; L-histidine from 5-phospho-alpha-D-ribose 1-diphosphate: step 5/9. Its function is as follows. IGPS catalyzes the conversion of PRFAR and glutamine to IGP, AICAR and glutamate. The HisH subunit catalyzes the hydrolysis of glutamine to glutamate and ammonia as part of the synthesis of IGP and AICAR. The resulting ammonia molecule is channeled to the active site of HisF. This Colwellia psychrerythraea (strain 34H / ATCC BAA-681) (Vibrio psychroerythus) protein is Imidazole glycerol phosphate synthase subunit HisH.